We begin with the raw amino-acid sequence, 279 residues long: High choriolytic enzyme 2 (279 aa).

The N-terminal stretch at 1-20 (MNLASSACLLLLFLLGIAQA) is a signal peptide. Positions 21 to 79 (LPVQNEEGHEEGNKEGHGEEGVEEGDEDDFVDFTTRILTSNNNTDQLLLEGDLVAPTNR) are cleaved as a propeptide — activation peptide. A compositionally biased stretch (basic and acidic residues) spans 26–40 (EEGHEEGNKEGHGEE). Positions 26-46 (EEGHEEGNKEGHGEEGVEEGD) are disordered. The N-linked (GlcNAc...) asparagine glycan is linked to Asn62. The region spanning 80 to 279 (NAMKCWYNSC…TRSNVLYNCR (200 aa)) is the Peptidase M12A domain. Intrachain disulfides connect Cys84-Cys89, Cys129-Cys278, and Cys150-Cys170. His178 contributes to the Zn(2+) binding site. Glu179 is a catalytic residue. Zn(2+)-binding residues include His182 and His188.

Requires Zn(2+) as cofactor.

It localises to the zymogen granule. The enzyme catalyses Hydrolysis of the inner layer of fish egg envelope. Also hydrolysis of casein and small molecule substrates such as succinyl-Leu-Leu-Val-Tyr-|-7-(4-methyl)coumarylamide.. Its function is as follows. Participates in the breakdown of the egg envelope, which is derived from the egg extracellular matrix, at the time of hatching. Thus allowing the newly hatched fish to swim free. HCE binds tightly to the egg envelope while it exerts the choriolytic swelling action. In Oryzias latipes (Japanese rice fish), this protein is High choriolytic enzyme 2 (hceb).